Consider the following 120-residue polypeptide: MITKTSKNAARQKRHARVRAKLSGTAERPRLNVFRSNKHIYAQIIDDVNGVTLASASTLDKDLNVESTGDSAAAAKVGELVAKRASEKGVSDVVFDRGGYLYHGRVKALADAAREAGLKF.

Residues 1 to 22 (MITKTSKNAARQKRHARVRAKL) form a disordered region. Residues 10-20 (ARQKRHARVRA) show a composition bias toward basic residues.

Belongs to the universal ribosomal protein uL18 family. As to quaternary structure, part of the 50S ribosomal subunit; part of the 5S rRNA/L5/L18/L25 subcomplex. Contacts the 5S and 23S rRNAs.

In terms of biological role, this is one of the proteins that bind and probably mediate the attachment of the 5S RNA into the large ribosomal subunit, where it forms part of the central protuberance. This Bacillus velezensis (strain DSM 23117 / BGSC 10A6 / LMG 26770 / FZB42) (Bacillus amyloliquefaciens subsp. plantarum) protein is Large ribosomal subunit protein uL18.